Reading from the N-terminus, the 108-residue chain is Protein Asterix (108 aa).

The segment at 1–29 is disordered; sequence MNMTVDPRRKEKINRYKAPKNQGQSGGAN. Residues 80–96 form a helical membrane-spanning segment; that stretch reads VLSSFMLSVSAVVMSYL.

The protein belongs to the Asterix family.

It localises to the membrane. This chain is Protein Asterix, found in Drosophila melanogaster (Fruit fly).